Reading from the N-terminus, the 430-residue chain is Serine/threonine transporter SstT (430 aa).

The next 9 membrane-spanning stretches (helical) occupy residues 24 to 44 (IIVG…VTWI), 47 to 67 (FGTL…FVLV), 82 to 102 (FGTV…VAVL), 144 to 164 (AIID…GLAM), 186 to 206 (VIRW…FTNV), 223 to 243 (LLVG…IFIF), 294 to 314 (IPLG…IMAM), 320 to 340 (LGIQ…ALGA), and 361 to 381 (FGIS…IGVI).

This sequence belongs to the dicarboxylate/amino acid:cation symporter (DAACS) (TC 2.A.23) family.

Its subcellular location is the cell membrane. It carries out the reaction L-serine(in) + Na(+)(in) = L-serine(out) + Na(+)(out). It catalyses the reaction L-threonine(in) + Na(+)(in) = L-threonine(out) + Na(+)(out). Its function is as follows. Involved in the import of serine and threonine into the cell, with the concomitant import of sodium (symport system). In Bifidobacterium adolescentis (strain ATCC 15703 / DSM 20083 / NCTC 11814 / E194a), this protein is Serine/threonine transporter SstT.